Reading from the N-terminus, the 513-residue chain is MGIQAAEISAILKDQIKNFGQEAEVAEIGRVLSVGDGIARVYGLDNVQAGEMVEFPGGIMGMALNLESDNVGVVIFGSDRDIKEGDTVKRTNSIVDVPAGPELLGRVVDGLGNPLDGKGPIEAKERKVADVKAPGIIPRKSVHEPMATGLKSVDAMIPVGRGQRELIIGDRQTGKTAIALDTILNQKSYNDAAGDDDSKKLYCVYVAVGQKRSTVAQLVKKLEESGAMEYSIVVAATASDPAPMQFLAPYAATAMAEYFRDSGKHALIIYDDLSKQAVAYRQMSLLLRRPPGREAYPGDVFYLHSRLLERSAKLNEDFGAGSLTALPIIETQGGDVSAFIPTNVISITDGQIFLETELFYQGIRPAVNTGLSVSRVGSSAQTDAMSSVAGPVKLSLAQYREMAAFAQFGSDLDAATQQLLARGARLTELMKQPQYSPLTNSEIVCIIFAGTNGYLDKVDVKEVGRYEAELLTFLRSKKADFLQWITDEDPKFKKGEPVEKMKAVLDEFAADFA.

169 to 176 lines the ATP pocket; the sequence is GDRQTGKT.

This sequence belongs to the ATPase alpha/beta chains family. In terms of assembly, F-type ATPases have 2 components, CF(1) - the catalytic core - and CF(0) - the membrane proton channel. CF(1) has five subunits: alpha(3), beta(3), gamma(1), delta(1), epsilon(1). CF(0) has three main subunits: a(1), b(2) and c(9-12). The alpha and beta chains form an alternating ring which encloses part of the gamma chain. CF(1) is attached to CF(0) by a central stalk formed by the gamma and epsilon chains, while a peripheral stalk is formed by the delta and b chains.

It localises to the cell inner membrane. The catalysed reaction is ATP + H2O + 4 H(+)(in) = ADP + phosphate + 5 H(+)(out). In terms of biological role, produces ATP from ADP in the presence of a proton gradient across the membrane. The alpha chain is a regulatory subunit. This chain is ATP synthase subunit alpha, found in Ruegeria sp. (strain TM1040) (Silicibacter sp.).